Here is a 166-residue protein sequence, read N- to C-terminus: Endoribonuclease YbeY (166 aa).

Zn(2+) contacts are provided by His132, His136, and His142.

Belongs to the endoribonuclease YbeY family. The cofactor is Zn(2+).

The protein resides in the cytoplasm. Its function is as follows. Single strand-specific metallo-endoribonuclease involved in late-stage 70S ribosome quality control and in maturation of the 3' terminus of the 16S rRNA. The protein is Endoribonuclease YbeY of Clostridium botulinum (strain Kyoto / Type A2).